Reading from the N-terminus, the 678-residue chain is UvrABC system protein B (678 aa).

The 387-residue stretch at glutamate 31–valine 417 folds into the Helicase ATP-binding domain. Glycine 44–threonine 51 contributes to the ATP binding site. The Beta-hairpin signature appears at tyrosine 97–isoleucine 120. The Helicase C-terminal domain occupies glutamine 436–leucine 602. The disordered stretch occupies residues aspartate 603–alanine 625. In terms of domain architecture, UVR spans glutamine 638–glutamine 673.

The protein belongs to the UvrB family. As to quaternary structure, forms a heterotetramer with UvrA during the search for lesions. Interacts with UvrC in an incision complex.

Its subcellular location is the cytoplasm. Functionally, the UvrABC repair system catalyzes the recognition and processing of DNA lesions. A damage recognition complex composed of 2 UvrA and 2 UvrB subunits scans DNA for abnormalities. Upon binding of the UvrA(2)B(2) complex to a putative damaged site, the DNA wraps around one UvrB monomer. DNA wrap is dependent on ATP binding by UvrB and probably causes local melting of the DNA helix, facilitating insertion of UvrB beta-hairpin between the DNA strands. Then UvrB probes one DNA strand for the presence of a lesion. If a lesion is found the UvrA subunits dissociate and the UvrB-DNA preincision complex is formed. This complex is subsequently bound by UvrC and the second UvrB is released. If no lesion is found, the DNA wraps around the other UvrB subunit that will check the other stand for damage. In Mannheimia succiniciproducens (strain KCTC 0769BP / MBEL55E), this protein is UvrABC system protein B.